Reading from the N-terminus, the 205-residue chain is Protein TON_1965 (205 aa).

Residues 7-201 (EWGEFLVRLA…EEYPKGPVKR (195 aa)) form the AMMECR1 domain.

This Thermococcus onnurineus (strain NA1) protein is Protein TON_1965.